Here is a 176-residue protein sequence, read N- to C-terminus: NADH-quinone oxidoreductase subunit I 2 (176 aa).

2 4Fe-4S ferredoxin-type domains span residues 45 to 77 (IVLT…MEAA) and 87 to 116 (RWFR…MTPD). The [4Fe-4S] cluster site is built by cysteine 57, cysteine 60, cysteine 63, cysteine 67, cysteine 96, cysteine 99, cysteine 102, and cysteine 106.

The protein belongs to the complex I 23 kDa subunit family. In terms of assembly, NDH-1 is composed of 14 different subunits. Subunits NuoA, H, J, K, L, M, N constitute the membrane sector of the complex. The cofactor is [4Fe-4S] cluster.

The protein resides in the cell inner membrane. The catalysed reaction is a quinone + NADH + 5 H(+)(in) = a quinol + NAD(+) + 4 H(+)(out). In terms of biological role, NDH-1 shuttles electrons from NADH, via FMN and iron-sulfur (Fe-S) centers, to quinones in the respiratory chain. The immediate electron acceptor for the enzyme in this species is believed to be ubiquinone. Couples the redox reaction to proton translocation (for every two electrons transferred, four hydrogen ions are translocated across the cytoplasmic membrane), and thus conserves the redox energy in a proton gradient. The chain is NADH-quinone oxidoreductase subunit I 2 from Geobacter sulfurreducens (strain ATCC 51573 / DSM 12127 / PCA).